The following is a 631-amino-acid chain: Probable potassium transport system protein Kup 1 (631 aa).

12 helical membrane-spanning segments follow: residues 17 to 37 (LALGALGVVFGDIGTSPLYAL), 55 to 75 (LSLIFWSLIIVVSFKYLMIIF), 101 to 121 (PLFYIVAIFGAGLLLGDGMLT), 140 to 160 (LYPYVLPIASVILVLLFSLQA), 166 to 186 (IGYLFGPLILIWFITIAILGI), 217 to 237 (FLLGGIFLVVTGGEALFADIG), 249 to 269 (FFIALPCLLLNYFGQGANLIV), 277 to 297 (PFFMIAPPWFYLPLIIIATVA), 338 to 358 (IYVPQINFILFIGTMAFCLAF), 370 to 390 (IAVNLEMLLVDAMVAYAAVSI), 395 to 415 (TFNVIFLFGLFLLIDLAFLGA), and 420 to 440 (FITGGWVPIVLAFVIAFIMYS).

It belongs to the HAK/KUP transporter (TC 2.A.72) family.

It localises to the cell inner membrane. The catalysed reaction is K(+)(in) + H(+)(in) = K(+)(out) + H(+)(out). Its function is as follows. Transport of potassium into the cell. Likely operates as a K(+):H(+) symporter. The polypeptide is Probable potassium transport system protein Kup 1 (Legionella pneumophila (strain Corby)).